We begin with the raw amino-acid sequence, 510 residues long: MKLAHWMYAGPAHIGTLRVASSFKNVHAIMHAPLGDDYFNVMRSMLERERNFTPATASIVDRHVLARGSRKRVVDHIIRKDKEEGPDLIILTPTCTSSILQEDLKNFVDRASIISDCNVIFADVDHYQVNEIQAADRTLEQVVRYYLEKSHTLDQFVTDAPSVNIIGILTLGFHNRHDCRELRRLLKDLDIRINQIIPEGGSVEDPKNLPKARFNLIPYREVGLMTAMYLNKEFGMPYVSTTPMGAVDMAECIRQIKKSLETLAAPILSSKRVDYESYIDGQTRFVSQAAWFSRSIDCQNFTGKETVVFGDATHAASITKILAREMGIRVSCTGTYCKHDAEWFKEQIKDFCDEIIITDDHAEVGDIISRVEPSAIFGTQMERHIGKRLEIPCGVISAPAHIQNFSLGYRPFLGYEGTNQIADLVYNSFALGMEDHLLDIFCGHDTKEIMTKSLSTDISPIWDPESRQELGKIPRFVRDEVKRNTEKFARRKGILNVTVEVMHAAKEALS.

Asp-36 is a binding site for [4Fe-4S] cluster. The active-site Proton donor is the Asp-297. 432-433 (GM) is a substrate binding site.

It belongs to the ChlB/BchB/BchZ family. As to quaternary structure, protochlorophyllide reductase is composed of three subunits; ChlL, ChlN and ChlB. Forms a heterotetramer of two ChlB and two ChlN subunits. It depends on [4Fe-4S] cluster as a cofactor.

It is found in the plastid. It localises to the chloroplast. It catalyses the reaction chlorophyllide a + oxidized 2[4Fe-4S]-[ferredoxin] + 2 ADP + 2 phosphate = protochlorophyllide a + reduced 2[4Fe-4S]-[ferredoxin] + 2 ATP + 2 H2O. It participates in porphyrin-containing compound metabolism; chlorophyll biosynthesis (light-independent). In terms of biological role, component of the dark-operative protochlorophyllide reductase (DPOR) that uses Mg-ATP and reduced ferredoxin to reduce ring D of protochlorophyllide (Pchlide) to form chlorophyllide a (Chlide). This reaction is light-independent. The NB-protein (ChlN-ChlB) is the catalytic component of the complex. This Pinus thunbergii (Japanese black pine) protein is Light-independent protochlorophyllide reductase subunit B.